The following is a 359-amino-acid chain: Peptide chain release factor 1 (359 aa).

N5-methylglutamine is present on glutamine 234. Positions 283–305 (SQKDAARAADRRAQVGSGDRSER) are disordered.

It belongs to the prokaryotic/mitochondrial release factor family. In terms of processing, methylated by PrmC. Methylation increases the termination efficiency of RF1.

It is found in the cytoplasm. In terms of biological role, peptide chain release factor 1 directs the termination of translation in response to the peptide chain termination codons UAG and UAA. The protein is Peptide chain release factor 1 of Methylobacterium sp. (strain 4-46).